The following is a 105-amino-acid chain: Ferredoxin (105 aa).

Residues Cys8 and Cys16 each contribute to the [3Fe-4S] cluster site. 4 residues coordinate [4Fe-4S] cluster: Cys20, Cys39, Cys42, and Cys45. In terms of domain architecture, 4Fe-4S ferredoxin-type spans 30–59 (RSLYIHPDECVDCGACEPVCPVEAIFYEDD). Residue Cys49 participates in [3Fe-4S] cluster binding.

The cofactor is [4Fe-4S] cluster. [3Fe-4S] cluster serves as cofactor.

Its function is as follows. Ferredoxins are iron-sulfur proteins that transfer electrons in a wide variety of metabolic reactions. Functionally, putative electron transport protein for the cytochrome P-450SOY system from the same organism. This chain is Ferredoxin, found in Streptomyces griseus.